The primary structure comprises 308 residues: Olfactory receptor 4E2 (308 aa).

The Extracellular portion of the chain corresponds to 1 to 24 (MGALNQTRVTEFIFLGLTDNWVLE). N5 is a glycosylation site (N-linked (GlcNAc...) asparagine). Residues 25–45 (ILFFVPFTVTYMLTLLGNFLI) traverse the membrane as a helical segment. Residues 46-57 (VVTIVFTPRLHN) lie on the Cytoplasmic side of the membrane. A helical transmembrane segment spans residues 58–78 (PMYFFLSNLSFIDICHSSVTV). Residues 79 to 97 (PKMLEGLLLERKTISFDNC) lie on the Extracellular side of the membrane. A disulfide bridge links C97 with C179. A helical membrane pass occupies residues 98 to 118 (IAQLFFLHLFACSEIFLLTIM). Cu cation-binding residues include H105 and C109. The Cytoplasmic segment spans residues 119-143 (AYDRYVAICIPLHYSNVMNMKVCVQ). Residues 144–164 (LVFALWLGGTIHSLVQTFLTI) traverse the membrane as a helical segment. The Extracellular portion of the chain corresponds to 165–204 (RLPYCGPNIIDSYFCDVPPVIKLACTDTYLTGILIVSNSG). Residues 205-225 (TISLVCFLALVTSYTVILFSL) traverse the membrane as a helical segment. The Cytoplasmic segment spans residues 226-236 (RKQSAEGRRKA). The helical transmembrane segment at 237 to 257 (LSTCSAHFMVVALFFGPCIFL) threads the bilayer. Topologically, residues 258 to 268 (YTRPDSSFSID) are extracellular. Cu cation is bound at residue R260. Residues 269–289 (KVVSVFYTVVTPLLNPLIYTL) traverse the membrane as a helical segment. The Cytoplasmic segment spans residues 290–308 (RNEEVKTAMKHLRQRRICS).

This sequence belongs to the G-protein coupled receptor 1 family. Expressed in olfactory epithelium, specifically in the olfactory sensory neurons of the septal organ.

The protein resides in the cell membrane. Copper binding enhances receptor activity in response to odorant binding. Its function is as follows. Olfactory receptor that is activated by the binding of organosulfur odorants with thioether groups such as (methylthio)methanethiol (MTMT) and bis(methylthiomethyl) disulfide. Also binds odorants cis-cyclooctene and tert-butyl mercaptan. The activity of this receptor is mediated by G proteins which activate adenylyl cyclase (Potential). This is Olfactory receptor 4E2 from Mus musculus (Mouse).